The chain runs to 472 residues: 3-isopropylmalate dehydratase large subunit (472 aa).

Residues Cys347, Cys407, and Cys410 each contribute to the [4Fe-4S] cluster site.

Belongs to the aconitase/IPM isomerase family. LeuC type 1 subfamily. As to quaternary structure, heterodimer of LeuC and LeuD. Requires [4Fe-4S] cluster as cofactor.

It catalyses the reaction (2R,3S)-3-isopropylmalate = (2S)-2-isopropylmalate. The protein operates within amino-acid biosynthesis; L-leucine biosynthesis; L-leucine from 3-methyl-2-oxobutanoate: step 2/4. Functionally, catalyzes the isomerization between 2-isopropylmalate and 3-isopropylmalate, via the formation of 2-isopropylmaleate. This Synechococcus sp. (strain WH7803) protein is 3-isopropylmalate dehydratase large subunit.